The primary structure comprises 262 residues: Probable cutinase 1 (262 aa).

The N-terminal stretch at 1–19 (MAPLKSLLLGASLATLALS) is a signal peptide. 2 cysteine pairs are disulfide-bonded: Cys48–Cys127 and Cys74–Cys88. The Nucleophile role is filled by Ser138. An intrachain disulfide couples Cys189 to Cys196. Asp193 is an active-site residue. His206 acts as the Proton donor/acceptor in catalysis. Positions 228-262 (SSSTTSSSSDAASSSSAAGTSSSGLSGLSSFFGGL) are disordered.

The protein belongs to the cutinase family.

Its subcellular location is the secreted. It carries out the reaction cutin + H2O = cutin monomers.. In terms of biological role, catalyzes the hydrolysis of complex carboxylic polyesters found in the cell wall of plants. Degrades cutin, a macromolecule that forms the structure of the plant cuticle. This chain is Probable cutinase 1, found in Aspergillus niger (strain ATCC MYA-4892 / CBS 513.88 / FGSC A1513).